A 4047-amino-acid polypeptide reads, in one-letter code: Cubilin homolog (4047 aa).

The N-terminal stretch at 1–22 (MIPNLQLFLSLILFGLLNHVSS) is a signal peptide. N-linked (GlcNAc...) asparagine glycosylation is found at asparagine 56, asparagine 92, and asparagine 127. Residues 168-205 (AINACDPNKCSNGGTCIPSFGAKFTCLCPPHFTGTTCE) form the EGF-like 1 domain. Cystine bridges form between cysteine 172-cysteine 183, cysteine 177-cysteine 193, cysteine 195-cysteine 204, cysteine 211-cysteine 227, cysteine 221-cysteine 236, cysteine 238-cysteine 247, cysteine 310-cysteine 321, cysteine 315-cysteine 330, cysteine 333-cysteine 344, cysteine 350-cysteine 363, cysteine 357-cysteine 372, cysteine 375-cysteine 386, cysteine 392-cysteine 403, cysteine 397-cysteine 418, cysteine 420-cysteine 434, cysteine 442-cysteine 453, cysteine 447-cysteine 463, cysteine 465-cysteine 474, cysteine 480-cysteine 491, cysteine 485-cysteine 500, cysteine 502-cysteine 511, cysteine 518-cysteine 544, cysteine 577-cysteine 601, cysteine 645-cysteine 667, cysteine 696-cysteine 719, and cysteine 769-cysteine 801. In terms of domain architecture, EGF-like 2; calcium-binding spans 207–248 (DIDECSVYNGTTAGCQNNGTCINNRGGFECQCQSGYHGSLCQ). N-linked (GlcNAc...) asparagine glycans are attached at residues asparagine 215 and asparagine 224. Residues 306–345 (DVNECESNPCHPGVDCINLPGSFVCSGCPKGYKTDGNVCI) enclose the EGF-like 3; calcium-binding domain. In terms of domain architecture, EGF-like 4; calcium-binding spans 346–387 (DVNECEGEIRVCSPLSKCHNTLGSYYCDSCPTGYSGDGGNCV). 3 EGF-like domains span residues 388–435 (KDDS…EGCV), 438–475 (ASNV…KFCE), and 476–512 (KTSP…RACE). 10 consecutive CUB domains span residues 518-641 (CGSH…WETV), 645-763 (CGYR…YKFT), 769-934 (CGAE…YEML), 934-1061 (LCEK…YKTS), 1065-1182 (CGGV…FEAV), 1188-1300 (CDFT…YETI), 1304-1427 (CGGR…FTTL), 1428-1558 (CNGI…WNTL), 1560-1680 (CSRD…VEFV), and 1691-1841 (CGQV…MIPK). Asparagine 528, asparagine 537, and asparagine 583 each carry an N-linked (GlcNAc...) asparagine glycan. Residues asparagine 775, asparagine 806, and asparagine 811 are each glycosylated (N-linked (GlcNAc...) asparagine). The cysteines at positions 877 and 896 are disulfide-linked. An N-linked (GlcNAc...) asparagine glycan is attached at asparagine 942. 3 disulfide bridges follow: cysteine 1065–cysteine 1091, cysteine 1120–cysteine 1145, and cysteine 1188–cysteine 1211. Asparagine 1133 is a glycosylation site (N-linked (GlcNAc...) asparagine). Asparagine 1229 carries an N-linked (GlcNAc...) asparagine glycan. Cysteine 1234 and cysteine 1262 are disulfide-bonded. Asparagine 1294 carries an N-linked (GlcNAc...) asparagine glycan. Cysteine 1304 and cysteine 1330 are oxidised to a cystine. N-linked (GlcNAc...) asparagine glycosylation occurs at asparagine 1353. 3 cysteine pairs are disulfide-bonded: cysteine 1428/cysteine 1455, cysteine 1488/cysteine 1522, and cysteine 1560/cysteine 1586. Asparagine 1513 carries N-linked (GlcNAc...) asparagine glycosylation. 4 N-linked (GlcNAc...) asparagine glycosylation sites follow: asparagine 1613, asparagine 1631, asparagine 1648, and asparagine 1674. Cysteine 1614 and cysteine 1641 are disulfide-bonded. A disulfide bond links cysteine 1691 and cysteine 1720. 4 N-linked (GlcNAc...) asparagine glycosylation sites follow: asparagine 1762, asparagine 1782, asparagine 1866, and asparagine 1890. Cysteine 1955 and cysteine 1979 form a disulfide bridge. The 129-residue stretch at 1955 to 2083 (CGGEVRHSQG…PLFKARYEKV (129 aa)) folds into the CUB 11 domain. N-linked (GlcNAc...) asparagine glycosylation is found at asparagine 2005, asparagine 2016, and asparagine 2017. A disulfide bond links cysteine 2006 and cysteine 2027. Positions 2052–2071 (ASDGNDDDDDTPDIDQQDSN) are disordered. Residues 2055 to 2067 (GNDDDDDTPDIDQ) are compositionally biased toward acidic residues. Asparagine 2193 carries an N-linked (GlcNAc...) asparagine glycan. 2 disulfides stabilise this stretch: cysteine 2207–cysteine 2238 and cysteine 2265–cysteine 2295. CUB domains follow at residues 2207-2334 (CGGD…YRLT), 2335-2463 (CNSF…IKEQ), 2467-2588 (CPSG…YGIA), 2590-2717 (CGGT…VTMS), and 2721-2859 (CGGR…YMAI). N-linked (GlcNAc...) asparagine glycans are attached at residues asparagine 2301 and asparagine 2305. 2 disulfide bridges follow: cysteine 2335–cysteine 2368 and cysteine 2395–cysteine 2424. Asparagine 2434 is a glycosylation site (N-linked (GlcNAc...) asparagine). 2 cysteine pairs are disulfide-bonded: cysteine 2467–cysteine 2498 and cysteine 2590–cysteine 2619. N-linked (GlcNAc...) asparagine glycosylation is found at asparagine 2599, asparagine 2645, asparagine 2657, and asparagine 2692. Cysteine 2646 and cysteine 2668 are oxidised to a cystine. 2 cysteine pairs are disulfide-bonded: cysteine 2721–cysteine 2747 and cysteine 2786–cysteine 2809. N-linked (GlcNAc...) asparagine glycosylation is found at asparagine 2811, asparagine 2845, asparagine 2875, and asparagine 2988. 4 disulfides stabilise this stretch: cysteine 2996–cysteine 3025, cysteine 3052–cysteine 3074, cysteine 3127–cysteine 3154, and cysteine 3181–cysteine 3217. 7 CUB domains span residues 2996–3121 (CGGV…YEFL), 3127–3254 (CGYH…WEAE), 3255–3385 (CGAI…YSIN), 3387–3508 (CGDN…VISS), 3515–3641 (CGGK…YSIV), 3645–3783 (CGGW…YNIL), and 3786–3900 (CNRT…YYTV). An N-linked (GlcNAc...) asparagine glycan is attached at asparagine 3235. Disulfide bonds link cysteine 3255-cysteine 3281, cysteine 3315-cysteine 3335, and cysteine 3387-cysteine 3418. Asparagine 3421 and asparagine 3461 each carry an N-linked (GlcNAc...) asparagine glycan. 2 disulfide bridges follow: cysteine 3445/cysteine 3468 and cysteine 3515/cysteine 3544. Asparagine 3635 carries an N-linked (GlcNAc...) asparagine glycan. 2 disulfide bridges follow: cysteine 3645–cysteine 3680 and cysteine 3708–cysteine 3742. Residues asparagine 3770, asparagine 3787, asparagine 3812, asparagine 3858, and asparagine 3930 are each glycosylated (N-linked (GlcNAc...) asparagine). 2 disulfides stabilise this stretch: cysteine 3786/cysteine 3815 and cysteine 3845/cysteine 3863.

It localises to the secreted. In terms of biological role, cotransporter which plays a role in lipoprotein, vitamin and iron metabolism, by facilitating their uptake. This Caenorhabditis elegans protein is Cubilin homolog.